Consider the following 348-residue polypeptide: Uroporphyrinogen decarboxylase (348 aa).

Residues 28–32 (RQAGR), D78, Y154, T209, and H325 contribute to the substrate site.

Belongs to the uroporphyrinogen decarboxylase family. Homodimer.

It localises to the cytoplasm. It catalyses the reaction uroporphyrinogen III + 4 H(+) = coproporphyrinogen III + 4 CO2. The protein operates within porphyrin-containing compound metabolism; protoporphyrin-IX biosynthesis; coproporphyrinogen-III from 5-aminolevulinate: step 4/4. Its function is as follows. Catalyzes the decarboxylation of four acetate groups of uroporphyrinogen-III to yield coproporphyrinogen-III. The chain is Uroporphyrinogen decarboxylase from Rhodopseudomonas palustris (strain BisA53).